The primary structure comprises 493 residues: Glutamate--tRNA ligase (493 aa).

The short motif at 10 to 20 (PSPTGTPHVGL) is the 'HIGH' region element. The 'KMSKS' region motif lies at 254–258 (KLSKR). Position 257 (lysine 257) interacts with ATP.

It belongs to the class-I aminoacyl-tRNA synthetase family. Glutamate--tRNA ligase type 1 subfamily. Monomer.

It localises to the cytoplasm. It carries out the reaction tRNA(Glu) + L-glutamate + ATP = L-glutamyl-tRNA(Glu) + AMP + diphosphate. Catalyzes the attachment of glutamate to tRNA(Glu) in a two-step reaction: glutamate is first activated by ATP to form Glu-AMP and then transferred to the acceptor end of tRNA(Glu). The protein is Glutamate--tRNA ligase of Corynebacterium efficiens (strain DSM 44549 / YS-314 / AJ 12310 / JCM 11189 / NBRC 100395).